Consider the following 141-residue polypeptide: Hemoglobin subunit alpha-1 (141 aa).

The region spanning 1–141 (VLTDEDKARV…LSKDLVSKYR (141 aa)) is the Globin domain. An O2-binding site is contributed by His-58. A heme b-binding site is contributed by His-87.

The protein belongs to the globin family. As to quaternary structure, heterotetramer of two alpha chains and two beta chains. As to expression, red blood cells.

Involved in oxygen transport from the lung to the various peripheral tissues. The protein is Hemoglobin subunit alpha-1 of Naja naja (Indian cobra).